Reading from the N-terminus, the 1197-residue chain is MTSGDKETPKREDFASALRFLMGGCAREPEMTAMAPLNLPKKWARILRMSSTPKIPIVDYLEAAESGNLDDFKRLFMADNSRIALKDAKGRTAAHQAAARNRVNILRYIRDQNGDFNAKDNAGNTPLHIAVESDAYDALDYLLSIPVDTGVLNEKKQAPVHLATELNKVKSLRVMGQYRNVIDIQQGGEHGRTALHLAAIYDHEECARILITEFDACPRKPCNNGYYPIHEAAKNASSKTMEVFFQWGEQRGCTREEMISFYDSEGNVPLHSAVHGGDIKAVELCLKSGAKISTQQHDLSTPVHLACAQGAIDIVKLMFEMQPMEKRLCLSCTDVQKMTPLHCASMFDHPDIVSYLVAEGADINALDKEHRSPLLLAASRSGWKTVHLLIRLGACISVKDAAARNVLHFVIMNGGRLTDFAEQVANCQTQAQLKLLLNEKDSMGCSPLHYASRDGHIRSLENLIRLGACINLKNNNNESPLHFAARYGRYNTVRQLLDSEKGSFIINESDGAGMTPLHISSQQGHTRVVQLLLNRGALLHRDHTGRNPLQLAAMSGYTETIELLHSVHSHLLDQVDKDGNTALHLATMENKPHAISVLMSMGCKLVYNVLDMSAIDYAIYYKYPEAALAMVTHEERANEVMALRSDKHPCVTLALIASMPKVFEAVQDKCITKANCKKDSKSFYIKYSFAFLQCPFMFAKIDEKTGESITTASPIPLPALNTMVTHGRVELLAHPLSQKYLQMKWNSYGKYFHLANLLIYSIFLVFVTIYSSLMMNNIELKAGDNKTMSQYCNMGWEQLTMNLSQNPSVASQIRLDSCEERINRTTAILFCAVVIVVYILLNSMRELIQIYQQKLHYILETVNLISWVLYISALVMVTPAFQPDGGINTIHYSAASIAVFLSWFRLLLFLQRFDQVGIYVVMFLEILQTLIKVLMVFSILIIAFGLAFYILLSKIIDPQPNHLSFSNIPMSLLRTFSMMLGELDFVGTYVNTYYRDQLKVPMTSFLILSVFMILMPILLMNLLIGLAVGDIESVRRNAQLKRLAMQVVLHTELERKLPHVWLQRVDKMELIEYPNETKCKLGFCDFILRKWFSNPFTEDSSMDVISFDNNDDYINAELERQRRKLRDISRMLEQQHHLVRLIVQKMEIKTEADDVDEGISPNELRSVVGLRSAGGNRWNSPRVRNKLRAALSFNKSM.

Topologically, residues 1-753 are cytoplasmic; that stretch reads MTSGDKETPK…KWNSYGKYFH (753 aa). ANK repeat units lie at residues 89-118, 122-151, 155-184, 190-219, 224-253, 265-294, 298-327, 336-365, 369-398, 443-472, 476-505, 512-541, 544-574, and 578-607; these read KGRT…DFNA, AGNT…DTGV, KKQA…VIDI, HGRT…ACPR, NGYY…QRGC, EGNV…KIST, DLST…MEKR, QKMT…DINA, EHRS…CISV, MGCS…CINL, NNES…GSFI, AGMT…LLHR, TGRN…LLDQ, and DGNT…KLVY. A helical membrane pass occupies residues 754 to 774; sequence LANLLIYSIFLVFVTIYSSLM. Topologically, residues 775–827 are extracellular; that stretch reads MNNIELKAGDNKTMSQYCNMGWEQLTMNLSQNPSVASQIRLDSCEERINRTTA. N-linked (GlcNAc...) asparagine glycosylation is found at N785, N802, and N823. A helical transmembrane segment spans residues 828-848; the sequence is ILFCAVVIVVYILLNSMRELI. The Cytoplasmic segment spans residues 849-856; that stretch reads QIYQQKLH. A helical transmembrane segment spans residues 857–877; sequence YILETVNLISWVLYISALVMV. Residues 878–889 lie on the Extracellular side of the membrane; sequence TPAFQPDGGINT. A helical membrane pass occupies residues 890–910; it reads IHYSAASIAVFLSWFRLLLFL. The Cytoplasmic portion of the chain corresponds to 911-932; the sequence is QRFDQVGIYVVMFLEILQTLIK. The helical transmembrane segment at 933–953 threads the bilayer; sequence VLMVFSILIIAFGLAFYILLS. Over 954–968 the chain is Extracellular; it reads KIIDPQPNHLSFSNI. The segment at residues 969 to 989 is an intramembrane region (pore-forming); it reads PMSLLRTFSMMLGELDFVGTY. The Extracellular portion of the chain corresponds to 990–1004; that stretch reads VNTYYRDQLKVPMTS. A helical membrane pass occupies residues 1005 to 1025; it reads FLILSVFMILMPILLMNLLIG. Residues 1026–1197 lie on the Cytoplasmic side of the membrane; that stretch reads LAVGDIESVR…RAALSFNKSM (172 aa).

This sequence belongs to the transient receptor (TC 1.A.4) family. As to quaternary structure, homotetramer.

Its subcellular location is the cell membrane. Functionally, essential for thermotaxis by sensing environmental temperature. Receptor-activated non-selective cation channel involved in detection of sensations such as temperature. Involved in heat nociception by being activated by warm temperature of about 24-29 degrees Celsius. In Drosophila melanogaster (Fruit fly), this protein is Transient receptor potential cation channel subfamily A member 1 (TrpA1).